Reading from the N-terminus, the 586-residue chain is Solute carrier family 13 member 2 (586 aa).

The next 3 helical transmembrane spans lie at 13–33 (SYLIVLCLPIFLLPLPLIVQT), 53–73 (ALPLAVTALFPIILFPLMGIM), and 86–106 (TNILFVGGLMVAIAVEHWNLH). Over residues 165 to 175 (DVEEGNSNPSF) the composition is skewed to polar residues. Residues 165 to 209 (DVEEGNSNPSFELQEASPQKEETKLDNGQAVSVSSEPRAQKTKEH) form a disordered region. 9 consecutive transmembrane segments (helical) span residues 215-235 (GLSLCICYSASIGGIATLTGT), 264-284 (FAFPTMVILLLLAWLWLQVLF), 319-339 (PMSFAEKAVTFLFVLLVVLWF), 366-386 (GTVAIFISLIMFIIPSKIPGL), 407-427 (TVNDKMPWNILILLGGGFALA), 445-465 (PLQHVPPSATVLILSLLVAIF), 478-498 (FLPILASMAQAICLHPLYVML), 506-526 (LAFMLPVATPPNAIVFSFGGL), and 535-555 (GFLLNIIGVLTITLSINSWSI).

It belongs to the SLC13A/DASS transporter (TC 2.A.47) family. NADC subfamily. In terms of tissue distribution, highly expressed in kidney and small intestine. Not detectable in brain, heart, stomach and skeletal muscle.

It localises to the apical cell membrane. It carries out the reaction succinate(out) + 3 Na(+)(out) = succinate(in) + 3 Na(+)(in). It catalyses the reaction fumarate(out) + 3 Na(+)(out) = fumarate(in) + 3 Na(+)(in). The enzyme catalyses 2-oxoglutarate(out) + 3 Na(+)(out) = 2-oxoglutarate(in) + 3 Na(+)(in). With respect to regulation, li(+) decreases succinate transport in the presence of Na(+), by competing at one of the three cation binding sites. Low-affinity sodium-dicarboxylate cotransporter, that mediates the entry of citric acid cycle intermediates, such as succinate, citrate, fumarate and alpha-ketoglutarate (2-oxoglutarate) into the small intestine and renal proximal tubule. Can transport citrate in a Na(+)-dependent manner, recognizing the divalent form of citrate rather than the trivalent form which is normally found in blood. Transports the dicarboxylate into the cell with a probable stoichiometry of 3 Na(+) for 1 divalent dicarboxylate, rendering the process electrogenic. Has a critical role in renal dicarboxylate transport. This chain is Solute carrier family 13 member 2 (Slc13a2), found in Mus musculus (Mouse).